Reading from the N-terminus, the 105-residue chain is Heat shock protein HspQ (105 aa).

A disordered region spans residues 75–105; the sequence is GEMQEEHPEQPSMDELARSIRQQLQAPRLRN.

Belongs to the HspQ family.

It localises to the cytoplasm. In terms of biological role, involved in the degradation of certain denaturated proteins, including DnaA, during heat shock stress. This chain is Heat shock protein HspQ, found in Cronobacter sakazakii (strain ATCC BAA-894) (Enterobacter sakazakii).